Consider the following 112-residue polypeptide: Integration host factor subunit alpha (112 aa).

It belongs to the bacterial histone-like protein family. As to quaternary structure, heterodimer of an alpha and a beta chain.

This protein is one of the two subunits of integration host factor, a specific DNA-binding protein that functions in genetic recombination as well as in transcriptional and translational control. The polypeptide is Integration host factor subunit alpha (Sinorhizobium medicae (strain WSM419) (Ensifer medicae)).